We begin with the raw amino-acid sequence, 363 residues long: Fructose-1,6-bisphosphatase 1 (363 aa).

Position 2 is an N-acetylvaline (V2). Residues V18–G22 and T28–T32 contribute to the AMP site. D69 and E98 together coordinate Mg(2+). K113–Y114 provides a ligand contact to AMP. Residues D119, L121, and D122 each coordinate Mg(2+). D122 to S125 serves as a coordination point for substrate. AMP is bound at residue R141. N6-succinyllysine is present on K151. Residues N213–Y216, R244–M249, Y265, and K275–R277 contribute to the substrate site. Y216, Y245, and Y265 each carry phosphotyrosine. E281 lines the Mg(2+) pocket. Residues S339 and S353 each carry the phosphoserine modification.

The protein belongs to the FBPase class 1 family. In terms of assembly, homotetramer. The cofactor is Mg(2+).

It catalyses the reaction beta-D-fructose 1,6-bisphosphate + H2O = beta-D-fructose 6-phosphate + phosphate. The protein operates within carbohydrate biosynthesis; gluconeogenesis. With respect to regulation, subject to complex allosteric regulation. The enzyme can assume an active R-state, or an inactive T-state. Intermediate conformations may exist. AMP acts as an allosteric inhibitor. AMP binding affects the turnover of bound substrate and not the affinity for substrate. Fructose 2,6-bisphosphate acts as a competitive inhibitor. Fructose 2,6-bisphosphate and AMP have synergistic effects. Functionally, catalyzes the hydrolysis of fructose 1,6-bisphosphate to fructose 6-phosphate in the presence of divalent cations, acting as a rate-limiting enzyme in gluconeogenesis. Plays a role in regulating glucose sensing and insulin secretion of pancreatic beta-cells. Appears to modulate glycerol gluconeogenesis in liver. Important regulator of appetite and adiposity; increased expression of the protein in liver after nutrient excess increases circulating satiety hormones and reduces appetite-stimulating neuropeptides and thus seems to provide a feedback mechanism to limit weight gain. The protein is Fructose-1,6-bisphosphatase 1 (Fbp1) of Rattus norvegicus (Rat).